A 657-amino-acid chain; its full sequence is N-acetylgalactosaminyltransferase 7 (657 aa).

The Cytoplasmic segment spans residues 1–6; it reads MRLKIG. A helical; Signal-anchor for type II membrane protein transmembrane segment spans residues 7–29; sequence FILRSLLVVGSFLGLVVLWSSLS. Positions 30-66 are disordered; sequence SRPDDPSPLSRMREDRDVNNPLPNRGGNGLAPGDDRF. At 30-657 the chain is on the lumenal side; sequence SRPDDPSPLS…KWEMNNIHSV (628 aa). Cystine bridges form between Cys-197/Cys-435, Cys-426/Cys-507, Cys-545/Cys-562, Cys-585/Cys-600, and Cys-625/Cys-640. A catalytic subdomain A region spans residues 206-317; that stretch reads LLTSSVVIVF…VNWYAPLVAP (112 aa). Asp-247 and Arg-277 together coordinate substrate. Positions 301 and 303 each coordinate Mn(2+). Residues 381-443 form a catalytic subdomain B region; the sequence is PYRSPAMAGG…PCSRVGHIYR (63 aa). Residue Trp-412 coordinates substrate. Residue His-440 coordinates Mn(2+). A substrate-binding site is contributed by Arg-443. Positions 532–652 constitute a Ricin B-type lectin domain; it reads VEWGEIRGLE…GKMTQKWEMN (121 aa).

The protein belongs to the glycosyltransferase 2 family. GalNAc-T subfamily. It depends on Mn(2+) as a cofactor. As to expression, highly expressed in sublingual gland. Expressed at lower level in stomach, small intestiine and colon.

The protein localises to the golgi apparatus membrane. It catalyses the reaction L-seryl-[protein] + UDP-N-acetyl-alpha-D-galactosamine = a 3-O-[N-acetyl-alpha-D-galactosaminyl]-L-seryl-[protein] + UDP + H(+). It carries out the reaction L-threonyl-[protein] + UDP-N-acetyl-alpha-D-galactosamine = a 3-O-[N-acetyl-alpha-D-galactosaminyl]-L-threonyl-[protein] + UDP + H(+). It functions in the pathway protein modification; protein glycosylation. Functionally, glycopeptide transferase involved in O-linked oligosaccharide biosynthesis, which catalyzes the transfer of an N-acetyl-D-galactosamine residue to an already glycosylated peptide. In contrast to other proteins of the family, it does not act as a peptide transferase that transfers GalNAc onto serine or threonine residue on the protein receptor, but instead requires the prior addition of a GalNAc on a peptide before adding additional GalNAc moieties. Some peptide transferase activity is however not excluded, considering that its appropriate peptide substrate may remain unidentified. The polypeptide is N-acetylgalactosaminyltransferase 7 (Galnt7) (Rattus norvegicus (Rat)).